The following is a 195-amino-acid chain: MEKFTIHTGTAAPLRRSNVDTDQIIPAVYLKRVTRTGFADGLFSGWREDQGFVLNDESYSDASILVAGPEFGTGSSREHAVWALRDWGFRAVLSPRFGDIFRGNALKGGLLPVELELEAIEEIWNRVEADPRTPVTVDLDARQVRVGEATWSFALDEFSRWRLMEGLDDIGLTLRHEVVIGDFEASRPPFLPTVT.

It belongs to the LeuD family. LeuD type 1 subfamily. Heterodimer of LeuC and LeuD.

The catalysed reaction is (2R,3S)-3-isopropylmalate = (2S)-2-isopropylmalate. It functions in the pathway amino-acid biosynthesis; L-leucine biosynthesis; L-leucine from 3-methyl-2-oxobutanoate: step 2/4. Catalyzes the isomerization between 2-isopropylmalate and 3-isopropylmalate, via the formation of 2-isopropylmaleate. This Salinispora arenicola (strain CNS-205) protein is 3-isopropylmalate dehydratase small subunit.